Consider the following 346-residue polypeptide: UDP-3-O-acylglucosamine N-acyltransferase (346 aa).

His240 acts as the Proton acceptor in catalysis.

The protein belongs to the transferase hexapeptide repeat family. LpxD subfamily. Homotrimer.

It catalyses the reaction a UDP-3-O-[(3R)-3-hydroxyacyl]-alpha-D-glucosamine + a (3R)-hydroxyacyl-[ACP] = a UDP-2-N,3-O-bis[(3R)-3-hydroxyacyl]-alpha-D-glucosamine + holo-[ACP] + H(+). It participates in bacterial outer membrane biogenesis; LPS lipid A biosynthesis. Catalyzes the N-acylation of UDP-3-O-acylglucosamine using 3-hydroxyacyl-ACP as the acyl donor. Is involved in the biosynthesis of lipid A, a phosphorylated glycolipid that anchors the lipopolysaccharide to the outer membrane of the cell. This Bacteroides fragilis (strain ATCC 25285 / DSM 2151 / CCUG 4856 / JCM 11019 / LMG 10263 / NCTC 9343 / Onslow / VPI 2553 / EN-2) protein is UDP-3-O-acylglucosamine N-acyltransferase.